The sequence spans 545 residues: Ribosomal protein uS12 methylthiotransferase RimO (545 aa).

In terms of domain architecture, MTTase N-terminal spans 7 to 129 (RRVALVTLGC…IGEHLDAVLG (123 aa)). Cysteine 16, cysteine 52, cysteine 92, cysteine 197, cysteine 201, and cysteine 204 together coordinate [4Fe-4S] cluster. One can recognise a Radical SAM core domain in the interval 183 to 414 (LTAGPVAALK…DLVEQLTATR (232 aa)). A TRAM domain is found at 416–510 (QERIGSRVQV…GVDLVAEFTA (95 aa)). Disordered regions lie at residues 454-486 (LPGPAGAAAGPPAGGPSGTGQPGLPGQPGQPGV) and 516-545 (RPSAGRGEAAPSATGARATVLVGRPRADGT). The segment covering 455–464 (PGPAGAAAGP) has biased composition (low complexity).

This sequence belongs to the methylthiotransferase family. RimO subfamily. The cofactor is [4Fe-4S] cluster.

The protein localises to the cytoplasm. It catalyses the reaction L-aspartate(89)-[ribosomal protein uS12]-hydrogen + (sulfur carrier)-SH + AH2 + 2 S-adenosyl-L-methionine = 3-methylsulfanyl-L-aspartate(89)-[ribosomal protein uS12]-hydrogen + (sulfur carrier)-H + 5'-deoxyadenosine + L-methionine + A + S-adenosyl-L-homocysteine + 2 H(+). Catalyzes the methylthiolation of an aspartic acid residue of ribosomal protein uS12. The protein is Ribosomal protein uS12 methylthiotransferase RimO of Frankia alni (strain DSM 45986 / CECT 9034 / ACN14a).